The sequence spans 457 residues: Senescence-associated protein OSA15, chloroplastic (457 aa).

A chloroplast-targeting transit peptide spans 1–57 (MATRIPGTVAASGVYYNDQYRMPCKLKGIHCMALNCIPQKAKVRKCMNGYQSTFRFC).

This sequence belongs to the ATA15/OSA15 family. Expressed in leaves (at protein level).

It is found in the plastid. Its subcellular location is the chloroplast. Its function is as follows. May be involved in the regulation of leaf senescence. The polypeptide is Senescence-associated protein OSA15, chloroplastic (Oryza sativa subsp. japonica (Rice)).